A 267-amino-acid chain; its full sequence is Exopolysaccharide production negative regulator (267 aa).

An N-terminal signal peptide occupies residues 1–23 (MVTSEFKLFKFMLMGMSIAVALA).

Negatively modulates exopolysaccharide (EPS) biosynthesis. This Rhizobium leguminosarum bv. viciae protein is Exopolysaccharide production negative regulator (exoR).